The sequence spans 157 residues: 2-C-methyl-D-erythritol 2,4-cyclodiphosphate synthase (157 aa).

Asp9 and His11 together coordinate a divalent metal cation. 4-CDP-2-C-methyl-D-erythritol 2-phosphate is bound by residues 9–11 and 35–36; these read DVH and HS. His43 lines the a divalent metal cation pocket. Residues 57-59, Phe140, and Arg143 contribute to the 4-CDP-2-C-methyl-D-erythritol 2-phosphate site; that span reads DIG.

The protein belongs to the IspF family. Homotrimer. The cofactor is a divalent metal cation.

It catalyses the reaction 4-CDP-2-C-methyl-D-erythritol 2-phosphate = 2-C-methyl-D-erythritol 2,4-cyclic diphosphate + CMP. The protein operates within isoprenoid biosynthesis; isopentenyl diphosphate biosynthesis via DXP pathway; isopentenyl diphosphate from 1-deoxy-D-xylulose 5-phosphate: step 4/6. Involved in the biosynthesis of isopentenyl diphosphate (IPP) and dimethylallyl diphosphate (DMAPP), two major building blocks of isoprenoid compounds. Catalyzes the conversion of 4-diphosphocytidyl-2-C-methyl-D-erythritol 2-phosphate (CDP-ME2P) to 2-C-methyl-D-erythritol 2,4-cyclodiphosphate (ME-CPP) with a corresponding release of cytidine 5-monophosphate (CMP). This is 2-C-methyl-D-erythritol 2,4-cyclodiphosphate synthase from Caldicellulosiruptor bescii (strain ATCC BAA-1888 / DSM 6725 / KCTC 15123 / Z-1320) (Anaerocellum thermophilum).